The sequence spans 251 residues: Proteasome subunit alpha type-7 (251 aa).

This sequence belongs to the peptidase T1A family. The 26S proteasome consists of a 20S proteasome core and two 19S regulatory subunits. The 20S proteasome core is composed of 28 subunits that are arranged in four stacked rings, resulting in a barrel-shaped structure. The two end rings are each formed by seven alpha subunits, and the two central rings are each formed by seven beta subunits. The catalytic chamber with the active sites is on the inside of the barrel.

Its subcellular location is the cytoplasm. The protein resides in the nucleus. In terms of biological role, the proteasome is a multicatalytic proteinase complex which is characterized by its ability to cleave peptides with Arg, Phe, Tyr, Leu, and Glu adjacent to the leaving group at neutral or slightly basic pH. The proteasome has an ATP-dependent proteolytic activity. The sequence is that of Proteasome subunit alpha type-7 (psma7) from Carassius auratus (Goldfish).